The following is a 104-amino-acid chain: L-rhamnose mutarotase (104 aa).

Position 18 (tyrosine 18) interacts with substrate. Histidine 22 (proton donor) is an active-site residue. Substrate contacts are provided by residues tyrosine 41 and 76–77 (WW). A disordered region spans residues 85 to 104 (PSNPDNSPISDALDPVFYLD).

Belongs to the rhamnose mutarotase family. Homodimer.

The protein resides in the cytoplasm. The enzyme catalyses alpha-L-rhamnose = beta-L-rhamnose. It functions in the pathway carbohydrate metabolism; L-rhamnose metabolism. Functionally, involved in the anomeric conversion of L-rhamnose. The chain is L-rhamnose mutarotase from Pectobacterium atrosepticum (strain SCRI 1043 / ATCC BAA-672) (Erwinia carotovora subsp. atroseptica).